Reading from the N-terminus, the 473-residue chain is Photosystem II CP43 reaction center protein (473 aa).

Residues 1–14 (MKTLYSLRRFYPVE) constitute a propeptide that is removed on maturation. At T15 the chain carries N-acetylthreonine. T15 is subject to Phosphothreonine. The next 5 membrane-spanning stretches (helical) occupy residues 69–93 (LFEVAHFVPEKPMYEQGLILLPHLA), 134–155 (LLGPETLEESFPFFGYVWKDRN), 178–200 (KALYFGGVYDTWAPGGGDVRKIT), 255–275 (KPFAWARRAFVWSGEAYLSYS), and 291–312 (WFNNTAYPSEFYGPTGPEASQA). E367 contacts [CaMn4O5] cluster. Residues 447 to 471 (RARAAAAGFEKGIDRDFEPVLSMTP) traverse the membrane as a helical segment.

This sequence belongs to the PsbB/PsbC family. PsbC subfamily. As to quaternary structure, PSII is composed of 1 copy each of membrane proteins PsbA, PsbB, PsbC, PsbD, PsbE, PsbF, PsbH, PsbI, PsbJ, PsbK, PsbL, PsbM, PsbT, PsbX, PsbY, PsbZ, Psb30/Ycf12, at least 3 peripheral proteins of the oxygen-evolving complex and a large number of cofactors. It forms dimeric complexes. Requires Binds multiple chlorophylls and provides some of the ligands for the Ca-4Mn-5O cluster of the oxygen-evolving complex. It may also provide a ligand for a Cl- that is required for oxygen evolution. PSII binds additional chlorophylls, carotenoids and specific lipids. as cofactor.

The protein localises to the plastid. Its subcellular location is the chloroplast thylakoid membrane. In terms of biological role, one of the components of the core complex of photosystem II (PSII). It binds chlorophyll and helps catalyze the primary light-induced photochemical processes of PSII. PSII is a light-driven water:plastoquinone oxidoreductase, using light energy to abstract electrons from H(2)O, generating O(2) and a proton gradient subsequently used for ATP formation. This is Photosystem II CP43 reaction center protein from Liriodendron tulipifera (Tuliptree).